We begin with the raw amino-acid sequence, 185 residues long: Prenylated Rab acceptor protein 1 (185 aa).

At 1-78 (MAAQKDQQKD…RNVEYYQSNY (78 aa)) the chain is on the cytoplasmic side. Residues 30-54 (AGREWLERRRATIRPWGTFVDQQRF) form a required for interaction with prenylated RAB3A and VAMP2 region. A run of 2 helical transmembrane segments spans residues 79–94 (VFVF…VTSP) and 95–112 (MLLV…ILYL). Topologically, residues 113–131 (RTLQSKLVLFGREVSPAHQ) are cytoplasmic. 2 consecutive transmembrane segments (helical) span residues 132 to 148 (YALA…LAGA) and 149 to 165 (GSAV…LIGS). The required for interaction with GDI1 stretch occupies residues 165-185 (SHAAFHQIEPADGEELQMEPV). Residues 166–185 (HAAFHQIEPADGEELQMEPV) are Cytoplasmic-facing. Residues 175–185 (ADGEELQMEPV) form a required for interaction with prenylated RAB3A and VAMP2 region. The tract at residues 175–185 (ADGEELQMEPV) is homodimerization.

It belongs to the PRA1 family. Homodimers. Interacts specifically with both prenylated Rab proteins (including RAB3A and RAB1), and VAMP2 (synaptobrevin-2), in an exclusive way. Interacts with NDRG1. Interacts with free GDI1 in the absence of Rab proteins. Also interacts with PCLO. As to expression, ubiquitous.

It localises to the cell membrane. The protein resides in the cytoplasm. The protein localises to the golgi apparatus. It is found in the cytoplasmic vesicle. Its subcellular location is the secretory vesicle. It localises to the synaptic vesicle. General Rab protein regulator required for vesicle formation from the Golgi complex. May control vesicle docking and fusion by mediating the action of Rab GTPases to the SNARE complexes. In addition it inhibits the removal of Rab GTPases from the membrane by GDI1. The chain is Prenylated Rab acceptor protein 1 (Rabac1) from Rattus norvegicus (Rat).